A 139-amino-acid chain; its full sequence is uncharacterized protein (139 aa).

3 helical membrane-spanning segments follow: residues 38–60, 72–94, and 114–136; these read YFLH…LYVF, FIIL…CAGS, and ITVV…LIVA.

Its subcellular location is the cell membrane. This is an uncharacterized protein from Treponema pallidum (strain Nichols).